The following is a 76-amino-acid chain: Large ribosomal subunit protein eL29 (76 aa).

Positions 1-29 (MAKSKNHTNHNQNKKAHRNGIKRPLRKRH) are enriched in basic residues. 2 disordered regions span residues 1–33 (MAKS…ESTL) and 47–76 (RKGN…PVTL). Residue serine 31 is modified to Phosphoserine. The segment covering 51–62 (LSREESVKRYNE) has biased composition (basic and acidic residues).

This sequence belongs to the eukaryotic ribosomal protein eL29 family.

The chain is Large ribosomal subunit protein eL29 (RpL29) from Drosophila melanogaster (Fruit fly).